A 192-amino-acid chain; its full sequence is Putative manganese efflux pump MntP (192 aa).

6 consecutive transmembrane segments (helical) span residues Leu3–Phe23, Phe38–Leu58, Gly61–Ile81, Val101–Val121, Ile130–Gly150, and Ile167–Trp187.

The protein belongs to the MntP (TC 9.B.29) family.

Its subcellular location is the cell membrane. Functionally, probably functions as a manganese efflux pump. The sequence is that of Putative manganese efflux pump MntP from Methanospirillum hungatei JF-1 (strain ATCC 27890 / DSM 864 / NBRC 100397 / JF-1).